The following is a 757-amino-acid chain: Catalase-peroxidase (757 aa).

The tryptophyl-tyrosyl-methioninium (Trp-Tyr) (with M-274) cross-link spans 101–248; that stretch reads WHSAGTYRIG…LAAVQMGLIY (148 aa). Catalysis depends on histidine 102, which acts as the Proton acceptor. Residues 210–231 form a disordered region; the sequence is SEGVHHPDEHSGAKEKASKNSD. The segment covering 212 to 231 has biased composition (basic and acidic residues); sequence GVHHPDEHSGAKEKASKNSD. A cross-link (tryptophyl-tyrosyl-methioninium (Tyr-Met) (with W-101)) is located at residues 248–274; the sequence is YVNPEGPDGRPDPLASARDIRETFARM. Histidine 289 contributes to the heme b binding site. The segment at 293-312 is disordered; that stretch reads KTHGAAPADNVGPEPEAGEL.

The protein belongs to the peroxidase family. Peroxidase/catalase subfamily. As to quaternary structure, homodimer or homotetramer. It depends on heme b as a cofactor. Post-translationally, formation of the three residue Trp-Tyr-Met cross-link is important for the catalase, but not the peroxidase activity of the enzyme.

The catalysed reaction is H2O2 + AH2 = A + 2 H2O. It catalyses the reaction 2 H2O2 = O2 + 2 H2O. In terms of biological role, bifunctional enzyme with both catalase and broad-spectrum peroxidase activity. The sequence is that of Catalase-peroxidase from Xylella fastidiosa (strain M12).